The primary structure comprises 89 residues: Submaxillary mucin (89 aa).

A disordered region spans residues 1-89; sequence AGSVGRTAGG…VGGSPVATTL (89 aa). An O-linked (GalNAc...) serine; partial glycan is attached at S3. O-linked (GalNAc...) threonine; partial glycosylation is found at T7 and T14. O-linked (GalNAc...) serine; partial glycosylation is present at S15. T23 carries an O-linked (GalNAc...) threonine; partial glycan. O-linked (GalNAc...) serine; partial glycosylation occurs at S25. The O-linked (GalNAc...) threonine; partial glycan is linked to T27. A glycan (O-linked (GalNAc...) serine; partial) is linked at S29. T34 is a glycosylation site (O-linked (GalNAc...) threonine; partial). S38 carries an O-linked (GalNAc...) serine; partial glycan. T42 is a glycosylation site (O-linked (GalNAc...) threonine; partial). 2 O-linked (GalNAc...) serine; partial glycosylation sites follow: S47 and S49. O-linked (GalNAc...) threonine; partial glycosylation occurs at T50. S54 carries O-linked (GalNAc...) serine; partial glycosylation. Residues 56–71 are compositionally biased toward low complexity; that stretch reads APGTTLAGRAGTTLGP. 4 O-linked (GalNAc...) threonine; partial glycosylation sites follow: T59, T60, T67, and T68. S73 and S76 each carry an O-linked (GalNAc...) serine; partial glycan. An O-linked (GalNAc...) threonine; partial glycan is attached at T78. S83 carries O-linked (GalNAc...) serine; partial glycosylation.

In terms of processing, heavily O-glycosylated at most but not all Ser and Thr residues. In terms of tissue distribution, expressed in the submaxillary salivary gland.

The protein localises to the secreted. The polypeptide is Submaxillary mucin (Canis lupus familiaris (Dog)).